The primary structure comprises 627 residues: Carnitine O-acetyltransferase (627 aa).

Residues 1 to 30 (MDRKQKQAEKARPYGLLKPAALGKIPGRFQ) constitute a propeptide that is removed on maturation. Lys-94 is modified (N6-succinyllysine). Lys-262 is modified (N6-acetyllysine; alternate). Residue Lys-262 is modified to N6-succinyllysine; alternate. Lys-269 is subject to N6-acetyllysine. Residue His-344 is the Proton acceptor of the active site. CoA-binding positions include Lys-420 and 424–431 (KSEKISPD). 2 residues coordinate (R)-carnitine: Tyr-453 and Ser-455. Residue Ser-457 coordinates CoA. A (R)-carnitine-binding site is contributed by Thr-466. Position 556 (Gln-556) interacts with CoA. The Microbody targeting signal motif lies at 625–627 (SKL).

It belongs to the carnitine/choline acetyltransferase family. As to quaternary structure, monomer.

The protein resides in the endoplasmic reticulum. It is found in the peroxisome. Its subcellular location is the mitochondrion inner membrane. The catalysed reaction is (R)-carnitine + acetyl-CoA = O-acetyl-(R)-carnitine + CoA. The enzyme catalyses propanoyl-CoA + (R)-carnitine = O-propanoyl-(R)-carnitine + CoA. It catalyses the reaction butanoyl-CoA + (R)-carnitine = O-butanoyl-(R)-carnitine + CoA. It carries out the reaction hexanoyl-CoA + (R)-carnitine = O-hexanoyl-(R)-carnitine + CoA. The catalysed reaction is octanoyl-CoA + (R)-carnitine = O-octanoyl-(R)-carnitine + CoA. The enzyme catalyses decanoyl-CoA + (R)-carnitine = O-decanoyl-(R)-carnitine + CoA. It catalyses the reaction 3-methylbutanoyl-CoA + (R)-carnitine = O-3-methylbutanoyl-(R)-carnitine + CoA. It carries out the reaction 2-methylpropanoyl-CoA + (R)-carnitine = O-isobutanoyl-(R)-carnitine + CoA. The catalysed reaction is 2-methylbutanoyl-CoA + (R)-carnitine = O-2-methylbutanoyl-(R)-carnitine + CoA. The enzyme catalyses acetoacetyl-CoA + (R)-carnitine = O-3-oxobutanoyl-(R)-carnitine + CoA. It catalyses the reaction 3-hydroxybutanoyl-CoA + (R)-carnitine = O-3-hydroxybutanoyl-(R)-carnitine + CoA. It carries out the reaction 4,8-dimethylnonanoyl-CoA + (R)-carnitine = O-4,8-dimethylnonanoyl-(R)-carnitine + CoA. The catalysed reaction is 2,6-dimethylheptanoyl-CoA + (R)-carnitine = O-2,6-dimethylheptanoyl-(R)-carnitine + CoA. Catalyzes the reversible transfer of acyl groups from carnitine to coenzyme A (CoA) and regulates the acyl-CoA/CoA ratio. Also plays a crucial role in the transport of fatty acids for beta-oxidation. Responsible for the synthesis of short- and branched-chain acylcarnitines. Active towards some branched-chain amino acid oxidation pathway (BCAAO) intermediates. Trans-2-enoyl-CoAs and 2-methylacyl-CoAs are poor substrates. The sequence is that of Carnitine O-acetyltransferase (CRAT) from Columba livia (Rock dove).